Reading from the N-terminus, the 469-residue chain is Ribulose bisphosphate carboxylase large chain (469 aa).

Lys-5 is modified (N6,N6,N6-trimethyllysine). Substrate is bound by residues Asn-114 and Thr-164. Residue Lys-166 is the Proton acceptor of the active site. Lys-168 provides a ligand contact to substrate. Mg(2+)-binding residues include Lys-192, Asp-194, and Glu-195. At Lys-192 the chain carries N6-carboxylysine. Residue His-285 is the Proton acceptor of the active site. Substrate contacts are provided by Arg-286, His-318, and Ser-370.

This sequence belongs to the RuBisCO large chain family. Type I subfamily. Heterohexadecamer of 8 large chains and 8 small chains; disulfide-linked. The disulfide link is formed within the large subunit homodimers. Mg(2+) serves as cofactor. The disulfide bond which can form in the large chain dimeric partners within the hexadecamer appears to be associated with oxidative stress and protein turnover.

It localises to the plastid. Its subcellular location is the chloroplast. The enzyme catalyses 2 (2R)-3-phosphoglycerate + 2 H(+) = D-ribulose 1,5-bisphosphate + CO2 + H2O. It catalyses the reaction D-ribulose 1,5-bisphosphate + O2 = 2-phosphoglycolate + (2R)-3-phosphoglycerate + 2 H(+). In terms of biological role, ruBisCO catalyzes two reactions: the carboxylation of D-ribulose 1,5-bisphosphate, the primary event in carbon dioxide fixation, as well as the oxidative fragmentation of the pentose substrate in the photorespiration process. Both reactions occur simultaneously and in competition at the same active site. This Nicandra physalodes (Apple-of-Peru) protein is Ribulose bisphosphate carboxylase large chain.